Reading from the N-terminus, the 120-residue chain is Protein VraC (120 aa).

The polypeptide is Protein VraC (Staphylococcus epidermidis (strain ATCC 12228 / FDA PCI 1200)).